The primary structure comprises 420 residues: UDP-N-acetylglucosamine 1-carboxyvinyltransferase (420 aa).

22–23 (KN) is a phosphoenolpyruvate binding site. R93 contributes to the UDP-N-acetyl-alpha-D-glucosamine binding site. Residue C117 is the Proton donor of the active site. C117 is subject to 2-(S-cysteinyl)pyruvic acid O-phosphothioketal. UDP-N-acetyl-alpha-D-glucosamine-binding residues include D306 and I328.

Belongs to the EPSP synthase family. MurA subfamily.

Its subcellular location is the cytoplasm. The enzyme catalyses phosphoenolpyruvate + UDP-N-acetyl-alpha-D-glucosamine = UDP-N-acetyl-3-O-(1-carboxyvinyl)-alpha-D-glucosamine + phosphate. It functions in the pathway cell wall biogenesis; peptidoglycan biosynthesis. Functionally, cell wall formation. Adds enolpyruvyl to UDP-N-acetylglucosamine. This Colwellia psychrerythraea (strain 34H / ATCC BAA-681) (Vibrio psychroerythus) protein is UDP-N-acetylglucosamine 1-carboxyvinyltransferase.